Reading from the N-terminus, the 471-residue chain is Glutamate--tRNA ligase 1 (471 aa).

The 'HIGH' region signature appears at 10–20; sequence PSPTGYLHIGG. Positions 99, 101, 126, and 128 each coordinate Zn(2+). The 'KMSKS' region motif lies at 238–242; the sequence is RLSKR. K241 contributes to the ATP binding site.

The protein belongs to the class-I aminoacyl-tRNA synthetase family. Glutamate--tRNA ligase type 1 subfamily. Monomer. It depends on Zn(2+) as a cofactor.

It is found in the cytoplasm. The enzyme catalyses tRNA(Glu) + L-glutamate + ATP = L-glutamyl-tRNA(Glu) + AMP + diphosphate. Its function is as follows. Catalyzes the attachment of glutamate to tRNA(Glu) in a two-step reaction: glutamate is first activated by ATP to form Glu-AMP and then transferred to the acceptor end of tRNA(Glu). The protein is Glutamate--tRNA ligase 1 of Alkalilimnicola ehrlichii (strain ATCC BAA-1101 / DSM 17681 / MLHE-1).